The following is a 213-amino-acid chain: ATP-dependent Clp protease proteolytic subunit (213 aa).

The active-site Nucleophile is the S114. Residue H139 is part of the active site.

The protein belongs to the peptidase S14 family. In terms of assembly, fourteen ClpP subunits assemble into 2 heptameric rings which stack back to back to give a disk-like structure with a central cavity, resembling the structure of eukaryotic proteasomes.

Its subcellular location is the cytoplasm. It catalyses the reaction Hydrolysis of proteins to small peptides in the presence of ATP and magnesium. alpha-casein is the usual test substrate. In the absence of ATP, only oligopeptides shorter than five residues are hydrolyzed (such as succinyl-Leu-Tyr-|-NHMec, and Leu-Tyr-Leu-|-Tyr-Trp, in which cleavage of the -Tyr-|-Leu- and -Tyr-|-Trp bonds also occurs).. Its function is as follows. Cleaves peptides in various proteins in a process that requires ATP hydrolysis. Has a chymotrypsin-like activity. Plays a major role in the degradation of misfolded proteins. The sequence is that of ATP-dependent Clp protease proteolytic subunit from Pseudomonas syringae pv. syringae (strain B728a).